Here is a 353-residue protein sequence, read N- to C-terminus: Photosystem II protein D1 (353 aa).

An N-acetylthreonine modification is found at T2. Position 2 is a phosphothreonine (T2). The next 3 membrane-spanning stretches (helical) occupy residues 29-46, 118-133, and 142-156; these read YIGWFGVLMIPTLLTATS, HFLLGVACYMGREWEL, and WIAVAYSAPVAAATA. Residue H118 coordinates chlorophyll a. Y126 contacts pheophytin a. The [CaMn4O5] cluster site is built by D170 and E189. Residues 197 to 218 traverse the membrane as a helical segment; it reads FHMLGVAGVFGGSLFSAMHGSL. H198 is a binding site for chlorophyll a. Residues H215 and 264 to 265 contribute to the a quinone site; that span reads SF. H215 contributes to the Fe cation binding site. Fe cation is bound at residue H272. Residues 274–288 form a helical membrane-spanning segment; the sequence is FLAAWPVVGIWFTAL. H332, E333, D342, and A344 together coordinate [CaMn4O5] cluster. Residues 345–353 constitute a propeptide that is removed on maturation; it reads AVEAPSING.

This sequence belongs to the reaction center PufL/M/PsbA/D family. In terms of assembly, PSII is composed of 1 copy each of membrane proteins PsbA, PsbB, PsbC, PsbD, PsbE, PsbF, PsbH, PsbI, PsbJ, PsbK, PsbL, PsbM, PsbT, PsbX, PsbY, PsbZ, Psb30/Ycf12, at least 3 peripheral proteins of the oxygen-evolving complex and a large number of cofactors. It forms dimeric complexes. It depends on The D1/D2 heterodimer binds P680, chlorophylls that are the primary electron donor of PSII, and subsequent electron acceptors. It shares a non-heme iron and each subunit binds pheophytin, quinone, additional chlorophylls, carotenoids and lipids. D1 provides most of the ligands for the Mn4-Ca-O5 cluster of the oxygen-evolving complex (OEC). There is also a Cl(-1) ion associated with D1 and D2, which is required for oxygen evolution. The PSII complex binds additional chlorophylls, carotenoids and specific lipids. as a cofactor. Post-translationally, tyr-161 forms a radical intermediate that is referred to as redox-active TyrZ, YZ or Y-Z. C-terminally processed by CTPA; processing is essential to allow assembly of the oxygen-evolving complex and thus photosynthetic growth.

The protein resides in the plastid. Its subcellular location is the chloroplast thylakoid membrane. It catalyses the reaction 2 a plastoquinone + 4 hnu + 2 H2O = 2 a plastoquinol + O2. In terms of biological role, photosystem II (PSII) is a light-driven water:plastoquinone oxidoreductase that uses light energy to abstract electrons from H(2)O, generating O(2) and a proton gradient subsequently used for ATP formation. It consists of a core antenna complex that captures photons, and an electron transfer chain that converts photonic excitation into a charge separation. The D1/D2 (PsbA/PsbD) reaction center heterodimer binds P680, the primary electron donor of PSII as well as several subsequent electron acceptors. In Chloranthus spicatus (Chulantree), this protein is Photosystem II protein D1.